Reading from the N-terminus, the 108-residue chain is Curli assembly protein CsgC (108 aa).

The first 8 residues, 1–8 (MHTLLLLA), serve as a signal peptide directing secretion.

This sequence belongs to the CsgC/AgfC family.

Its subcellular location is the periplasm. Its function is as follows. Plays a role in the extracellular assembly of CsgA into thin aggregative fimbriae (Tafi) fibers. Assembly may also require CsgE. Tafi are thought to be assembled via an extracellular nucleation-precipitation (ENP) pathway, and possibly also via an intracellular non-CsgC-dependent pathway. This Salmonella arizonae (strain ATCC BAA-731 / CDC346-86 / RSK2980) protein is Curli assembly protein CsgC.